Here is a 125-residue protein sequence, read N- to C-terminus: Large ribosomal subunit protein bL12 (125 aa).

It belongs to the bacterial ribosomal protein bL12 family. As to quaternary structure, homodimer. Part of the ribosomal stalk of the 50S ribosomal subunit. Forms a multimeric L10(L12)X complex, where L10 forms an elongated spine to which 2 to 4 L12 dimers bind in a sequential fashion. Binds GTP-bound translation factors.

Functionally, forms part of the ribosomal stalk which helps the ribosome interact with GTP-bound translation factors. Is thus essential for accurate translation. The polypeptide is Large ribosomal subunit protein bL12 (Endomicrobium trichonymphae).